The following is a 563-amino-acid chain: Phosphomethylpyrimidine synthase (563 aa).

The interval 95 to 115 is disordered; sequence PGKNPSPMNNRTPVRAKQGKS. Residues N200, M229, Y258, H294, 314–316, 355–358, and E394 contribute to the substrate site; these read SRG and DALR. Zn(2+) is bound at residue H398. Y421 is a substrate binding site. H462 serves as a coordination point for Zn(2+). [4Fe-4S] cluster is bound by residues C544, C547, and C552.

Belongs to the ThiC family. Requires [4Fe-4S] cluster as cofactor.

It carries out the reaction 5-amino-1-(5-phospho-beta-D-ribosyl)imidazole + S-adenosyl-L-methionine = 4-amino-2-methyl-5-(phosphooxymethyl)pyrimidine + CO + 5'-deoxyadenosine + formate + L-methionine + 3 H(+). It functions in the pathway cofactor biosynthesis; thiamine diphosphate biosynthesis. Its function is as follows. Catalyzes the synthesis of the hydroxymethylpyrimidine phosphate (HMP-P) moiety of thiamine from aminoimidazole ribotide (AIR) in a radical S-adenosyl-L-methionine (SAM)-dependent reaction. In Chlorobium phaeobacteroides (strain BS1), this protein is Phosphomethylpyrimidine synthase.